Consider the following 217-residue polypeptide: Uracil-DNA glycosylase (217 aa).

The Proton acceptor role is filled by D62.

Belongs to the uracil-DNA glycosylase (UDG) superfamily. UNG family.

The protein localises to the cytoplasm. The catalysed reaction is Hydrolyzes single-stranded DNA or mismatched double-stranded DNA and polynucleotides, releasing free uracil.. Excises uracil residues from the DNA which can arise as a result of misincorporation of dUMP residues by DNA polymerase or due to deamination of cytosine. The sequence is that of Uracil-DNA glycosylase from Streptococcus sanguinis (strain SK36).